Here is an 80-residue protein sequence, read N- to C-terminus: Exodeoxyribonuclease 7 small subunit (80 aa).

This sequence belongs to the XseB family. In terms of assembly, heterooligomer composed of large and small subunits.

The protein resides in the cytoplasm. The catalysed reaction is Exonucleolytic cleavage in either 5'- to 3'- or 3'- to 5'-direction to yield nucleoside 5'-phosphates.. Its function is as follows. Bidirectionally degrades single-stranded DNA into large acid-insoluble oligonucleotides, which are then degraded further into small acid-soluble oligonucleotides. The sequence is that of Exodeoxyribonuclease 7 small subunit from Vibrio parahaemolyticus serotype O3:K6 (strain RIMD 2210633).